The primary structure comprises 500 residues: 7-alpha-hydroxycholest-4-en-3-one 12-alpha-hydroxylase (500 aa).

Residues 2–21 (VLWGLLGALLMVMVGWLCLP) form a helical membrane-spanning segment. S325 bears the Phosphoserine mark. Position 439 (C439) interacts with heme.

Belongs to the cytochrome P450 family. The cofactor is heme. In terms of tissue distribution, liver (at protein level).

The protein localises to the endoplasmic reticulum membrane. Its subcellular location is the microsome membrane. The enzyme catalyses 7alpha-hydroxycholest-4-en-3-one + reduced [NADPH--hemoprotein reductase] + O2 = 7alpha,12alpha-dihydroxycholest-4-en-3-one + oxidized [NADPH--hemoprotein reductase] + H2O + H(+). It carries out the reaction 5beta-cholestane-3alpha,7alpha-diol + reduced [NADPH--hemoprotein reductase] + O2 = 5beta-cholestane-3alpha,7alpha,12alpha-triol + oxidized [NADPH--hemoprotein reductase] + H2O + H(+). It catalyses the reaction chenodeoxycholate + reduced [NADPH--hemoprotein reductase] + O2 = cholate + oxidized [NADPH--hemoprotein reductase] + H2O + H(+). It functions in the pathway lipid metabolism; bile acid biosynthesis. Up-regulated upon treatment with streptozotocin. A cytochrome P450 monooxygenase involved in primary bile acid biosynthesis. Catalyzes the 12alpha-hydroxylation of 7alpha-hydroxy-4-cholesten-3-one, an intermediate metabolite in cholic acid biosynthesis. Controls biliary balance of cholic acid and chenodeoxycholic acid, ultimately regulating the intestinal absorption of dietary lipids. Mechanistically, uses molecular oxygen inserting one oxygen atom into a substrate, and reducing the second into a water molecule, with two electrons provided by NADPH via cytochrome P450 reductase (CPR; NADPH--hemoprotein reductase). This Oryctolagus cuniculus (Rabbit) protein is 7-alpha-hydroxycholest-4-en-3-one 12-alpha-hydroxylase (CYP8B1).